The primary structure comprises 138 residues: Large ribosomal subunit protein uL16 (138 aa).

Residues 1–14 (MLQPKRTKYRRTHR) are compositionally biased toward basic residues. The interval 1 to 24 (MLQPKRTKYRRTHRLQHDKGEAHT) is disordered. The span at 15 to 24 (LQHDKGEAHT) shows a compositional bias: basic and acidic residues.

This sequence belongs to the universal ribosomal protein uL16 family. Part of the 50S ribosomal subunit.

In terms of biological role, binds 23S rRNA and is also seen to make contacts with the A and possibly P site tRNAs. The chain is Large ribosomal subunit protein uL16 from Mycoplasma mobile (strain ATCC 43663 / 163K / NCTC 11711) (Mesomycoplasma mobile).